A 350-amino-acid polypeptide reads, in one-letter code: C5a anaphylatoxin chemotactic receptor 1 (350 aa).

The Extracellular portion of the chain corresponds to 1 to 37 (MDSFDYTTPDYGHYDDKDTLDLNTPVDKTSNTLRVPD). The required for CHIPS binding stretch occupies residues 10–18 (DYGHYDDKD). Residues Tyr-11 and Tyr-14 each carry the sulfotyrosine modification. The interval 21-30 (DLNTPVDKTS) is involved in C5a binding. Residues 38–64 (ILALVIFAVVFLVGVLGNALVVWVTAF) traverse the membrane as a helical segment. The Cytoplasmic portion of the chain corresponds to 65–69 (EAKRT). The chain crosses the membrane as a helical span at residues 70–93 (INAIWFLNLAVADFLSCLALPILF). At 94-110 (TSIVQHHHWPFGGAACS) the chain is on the extracellular side. Cysteines 109 and 188 form a disulfide. A helical membrane pass occupies residues 111-132 (ILPSLILLNMYASILLLATISA). The Cytoplasmic portion of the chain corresponds to 133 to 153 (DRFLLVFKPIWCQNFRGAGLA). A helical transmembrane segment spans residues 154-174 (WIACAVAWGLALLLTIPSFLY). Over 175–200 (RVVREEYFPPKVLCGVDYSHDKRRER) the chain is Extracellular. A helical membrane pass occupies residues 201-226 (AVAIVRLVLGFLWPLLTLMICYTFIL). At 227–242 (LRTWSRRATRSTKTLK) the chain is on the cytoplasmic side. The helical transmembrane segment at 243 to 265 (VVVAVVASFFIFWLPYQVTGIMM) threads the bilayer. Topologically, residues 266–282 (SFLEPSSPTFRLLKKLD) are extracellular. The helical transmembrane segment at 283 to 303 (SLCVSFAYINCCINPIIYVVA) threads the bilayer. Topologically, residues 304–350 (GQGFQGRLQKSLPSLLRNVLTEESVVRESKSFARSTVDTMADKTQAV) are cytoplasmic. 6 positions are modified to phosphoserine: Ser-314, Ser-317, Ser-327, Ser-332, Ser-334, and Ser-338.

It belongs to the G-protein coupled receptor 1 family. As to quaternary structure, homodimer. May also form higher-order oligomers. Interacts (when phosphorylated) with ARRB1 and ARRB2; the interaction is associated with internalization of C5aR. Interacts (via N-terminal domain) with S.aureus chemotaxis inhibitory protein (CHIPS); the interaction blocks the receptor and may thus inhibit the immune response. Sulfation plays a critical role in the association of C5aR with C5a, but no significant role in the ability of the receptor to transduce a signal and mobilize calcium in response to a small peptide agonist. Sulfation at Tyr-14 is important for CHIPS binding. In terms of processing, phosphorylated on serine residues in response to C5a binding, resulting in internalization of the receptor and short-term desensitization to C5a.

It is found in the cell membrane. Its subcellular location is the cytoplasmic vesicle. Functionally, receptor for the chemotactic and inflammatory peptide anaphylatoxin C5a. The ligand interacts with at least two sites on the receptor: a high-affinity site on the extracellular N-terminus, and a second site in the transmembrane region which activates downstream signaling events. Receptor activation stimulates chemotaxis, granule enzyme release, intracellular calcium release and superoxide anion production. The polypeptide is C5a anaphylatoxin chemotactic receptor 1 (C5AR1) (Pan troglodytes (Chimpanzee)).